The following is a 75-amino-acid chain: Exodeoxyribonuclease 7 small subunit (75 aa).

It belongs to the XseB family. In terms of assembly, heterooligomer composed of large and small subunits.

It is found in the cytoplasm. It carries out the reaction Exonucleolytic cleavage in either 5'- to 3'- or 3'- to 5'-direction to yield nucleoside 5'-phosphates.. In terms of biological role, bidirectionally degrades single-stranded DNA into large acid-insoluble oligonucleotides, which are then degraded further into small acid-soluble oligonucleotides. The protein is Exodeoxyribonuclease 7 small subunit of Chlamydia abortus (strain DSM 27085 / S26/3) (Chlamydophila abortus).